Consider the following 320-residue polypeptide: Epoxidase atD (320 aa).

2 N-linked (GlcNAc...) asparagine glycosylation sites follow: asparagine 245 and asparagine 299.

It functions in the pathway secondary metabolite biosynthesis. Functionally, epoxidase; part of the gene cluster that mediates the biosynthesis of terreic acid, a quinone epoxide inhibitor of Bruton's tyrosine kinase. The first step of the pathway is the synthesis of 6-methylsalicylic acid (6-MSA) by the 6-methylsalicylic acid synthase atX. In the biosynthesis of 6-MSA, atX utilizes one acetyl-CoA and three malonyl-CoAs as its substrates and catalyzes a series of programmed reactions including Claisen condensation, reduction, aldol cyclization, and the hydrolytic cleavage that yields 6-MSA. The 6-methylsalicylate 1-monooxygenase atA then catalyzes the decarboxylative hydroxylation of 6-MSA to 3-methylcatechol. The next step is the conversion of 3-methylcatechol to 3-methyl-1,2,4-benzenetriol by cytochrome P450 monooxygenase atE, which is enhanced by cytochrome P450 monooxygenase atG. Then, the epoxidase atD catalyzes the epoxidation and hydroxyl oxidation of 3-methyl-1,2,4-benzenetriol to terremutin. Lastly, GMC oxidoreductase atC oxidizes terremutin to terreic acid. The sequence is that of Epoxidase atD from Aspergillus terreus (strain NIH 2624 / FGSC A1156).